We begin with the raw amino-acid sequence, 269 residues long: Putative hydro-lyase RL2444 (269 aa).

Belongs to the D-glutamate cyclase family.

The polypeptide is Putative hydro-lyase RL2444 (Rhizobium johnstonii (strain DSM 114642 / LMG 32736 / 3841) (Rhizobium leguminosarum bv. viciae)).